Reading from the N-terminus, the 379-residue chain is Chaperone protein DnaJ (379 aa).

The region spanning 5 to 70 is the J domain; that stretch reads DYYESLGVAK…QKRAAYDQYG (66 aa). The CR-type zinc-finger motif lies at 134-212; sequence GVTKEIRIPA…CHGHGRVEKS (79 aa). Zn(2+) contacts are provided by Cys-147, Cys-150, Cys-164, Cys-167, Cys-186, Cys-189, Cys-200, and Cys-203. CXXCXGXG motif repeat units lie at residues 147-154, 164-171, 186-193, and 200-207; these read CDVCHGNG, CPTCHGNG, CPHCHGRG, and CIKCHGHG.

The protein belongs to the DnaJ family. As to quaternary structure, homodimer. Requires Zn(2+) as cofactor.

The protein resides in the cytoplasm. Its function is as follows. Participates actively in the response to hyperosmotic and heat shock by preventing the aggregation of stress-denatured proteins and by disaggregating proteins, also in an autonomous, DnaK-independent fashion. Unfolded proteins bind initially to DnaJ; upon interaction with the DnaJ-bound protein, DnaK hydrolyzes its bound ATP, resulting in the formation of a stable complex. GrpE releases ADP from DnaK; ATP binding to DnaK triggers the release of the substrate protein, thus completing the reaction cycle. Several rounds of ATP-dependent interactions between DnaJ, DnaK and GrpE are required for fully efficient folding. Also involved, together with DnaK and GrpE, in the DNA replication of plasmids through activation of initiation proteins. The sequence is that of Chaperone protein DnaJ from Pectobacterium atrosepticum (strain SCRI 1043 / ATCC BAA-672) (Erwinia carotovora subsp. atroseptica).